The chain runs to 581 residues: Pentatricopeptide repeat-containing protein At1g34160 (581 aa).

PPR repeat units lie at residues 67 to 101 (LTND…SSSS), 108 to 142 (DALT…GLSA), 143 to 173 (DSLL…MPVR), 174 to 208 (DVAS…GIRR), 209 to 239 (SEVT…YSND), 240 to 270 (NVIV…FTGK), 272 to 306 (SVVT…GIKP), 307 to 341 (DDVS…GVER), and 342 to 372 (NMKH…MSMI). Residues 377–452 (LWQSLLGASE…IPGLSYIEAK (76 aa)) form a type E motif region. The interval 453-483 (GTIHEFYNSDKSHEQWREIYEKIDEIRFKIR) is type E(+) motif. The segment at 484–581 (EDGYVAQTGL…DGSCSCRDFW (98 aa)) is type DYW motif.

The protein belongs to the PPR family. PCMP-H subfamily.

The polypeptide is Pentatricopeptide repeat-containing protein At1g34160 (PCMP-H68) (Arabidopsis thaliana (Mouse-ear cress)).